The chain runs to 472 residues: Adenosylhomocysteinase (472 aa).

Substrate is bound by residues T64, D138, and E198. 199-201 (TTT) is a binding site for NAD(+). K228 and D232 together coordinate substrate. NAD(+) contacts are provided by residues N233, 262-267 (GFGDVG), E285, N320, 341-343 (IGH), and N386.

The protein belongs to the adenosylhomocysteinase family. NAD(+) is required as a cofactor.

It localises to the cytoplasm. The enzyme catalyses S-adenosyl-L-homocysteine + H2O = L-homocysteine + adenosine. The protein operates within amino-acid biosynthesis; L-homocysteine biosynthesis; L-homocysteine from S-adenosyl-L-homocysteine: step 1/1. May play a key role in the regulation of the intracellular concentration of adenosylhomocysteine. The protein is Adenosylhomocysteinase of Prochlorococcus marinus subsp. pastoris (strain CCMP1986 / NIES-2087 / MED4).